We begin with the raw amino-acid sequence, 4690 residues long: Nonribosomal peptide synthetase sidN (4690 aa).

Residues A238–K656 form an adenylation 1 region. The 78-residue stretch at S779–L856 folds into the Carrier 1 domain. O-(pantetheine 4'-phosphoryl)serine is present on S816. The interval P925 to F1175 is condensation 1. The tract at residues E1349–R1760 is adenylation 2. One can recognise a Carrier 2 domain in the interval P1889–R1965. S1926 is subject to O-(pantetheine 4'-phosphoryl)serine. A condensation 2 region spans residues P2001–V2285. Positions T2464 to R2869 are adenylation 3. In terms of domain architecture, Carrier 3 spans R3002–K3079. S3040 is modified (O-(pantetheine 4'-phosphoryl)serine). The segment at C3121–T3530 is condensation 3. The 74-residue stretch at S3564 to S3637 folds into the Carrier 4 domain. S3598 is subject to O-(pantetheine 4'-phosphoryl)serine. Residues V3679–E4087 form a condensation 4 region. Residues S4119–S4195 enclose the Carrier 5 domain. S4156 bears the O-(pantetheine 4'-phosphoryl)serine mark. Positions W4262–N4589 are condensation 5.

The protein belongs to the NRP synthetase family.

The protein operates within siderophore biosynthesis. Functionally, nonribosomal peptide synthetase required for the biosynthetis of epichloenin A, an extracellular siderophore that plays a crucial role in endophyte-grass symbioses. SidN assembles epichloenin A by activating and incorporating three trans-anhydromevalonylhydroxyornithine (trans-AMHO), 1 glutamine and 4 glycine moieties. Trans-AMHO is produced from L-ornithine via 2 steps involving a L-ornithine N(5)-monooxygenase and an AHMO-N(5)-transacylase that have still to be identified. The third adenylation domain (A3) of sidN incorporates the hydroxamate groups of the siderophore which forms an octahedral iron complex. The other component amino acids are assembled by sidN adenylation domains A1 and A2. The protein is Nonribosomal peptide synthetase sidN of Epichloe festucae (strain E2368).